The sequence spans 66 residues: Sodium/potassium-transporting ATPase subunit gamma (66 aa).

Residues glycine 29–leucine 46 form a helical membrane-spanning segment.

The protein belongs to the FXYD family. In terms of assembly, regulatory subunit of the sodium/potassium-transporting ATPase which is composed of a catalytic alpha subunit, an auxiliary non-catalytic beta subunit and an additional regulatory subunit. In terms of tissue distribution, highest levels expressed in the kidney and spleen. Restricted to the basolateral membrane in renal epithelial cells and varies in its level of expression along the nephron.

The protein resides in the membrane. Functionally, may be involved in forming the receptor site for cardiac glycoside binding or may modulate the transport function of the sodium ATPase. The polypeptide is Sodium/potassium-transporting ATPase subunit gamma (Fxyd2) (Rattus norvegicus (Rat)).